The following is a 176-amino-acid chain: MIYKLTPALRDDLKTPFGTLYPGKGESCLAKVVKALDKPPKIISIGDVTTFYLIKAGVVPDMCLVDDQTMRLPVDHEVRKGTSHHTFKELRVSNPAGVVTQALMDLIKDNMSSTEPVRIFVDGEEDLAVIPACLYAPIGSAVIYGQPNEGVVVVRVTEEKRKETKALLDKMERVDE.

4 residues coordinate GTP: Asp-47, Val-48, Asp-66, and Glu-125.

Belongs to the GTP-dependent DPCK family.

It catalyses the reaction 3'-dephospho-CoA + GTP = GDP + CoA + H(+). The protein operates within cofactor biosynthesis; coenzyme A biosynthesis. In terms of biological role, catalyzes the GTP-dependent phosphorylation of the 3'-hydroxyl group of dephosphocoenzyme A to form coenzyme A (CoA). In Methanocella arvoryzae (strain DSM 22066 / NBRC 105507 / MRE50), this protein is GTP-dependent dephospho-CoA kinase.